Here is a 353-residue protein sequence, read N- to C-terminus: Dihydroorotate dehydrogenase (quinone) (353 aa).

FMN contacts are provided by residues A67 to K71 and T91. Residue K71 participates in substrate binding. N116 to F120 contacts substrate. FMN is bound by residues N144 and N177. A substrate-binding site is contributed by N177. The Nucleophile role is filled by S180. N182 lines the substrate pocket. Residues K215 and T243 each coordinate FMN. N244–T245 provides a ligand contact to substrate. FMN contacts are provided by residues G264, G293, and Y314 to T315.

The protein belongs to the dihydroorotate dehydrogenase family. Type 2 subfamily. Monomer. FMN serves as cofactor.

It localises to the cell membrane. The catalysed reaction is (S)-dihydroorotate + a quinone = orotate + a quinol. It functions in the pathway pyrimidine metabolism; UMP biosynthesis via de novo pathway; orotate from (S)-dihydroorotate (quinone route): step 1/1. Its function is as follows. Catalyzes the conversion of dihydroorotate to orotate with quinone as electron acceptor. This chain is Dihydroorotate dehydrogenase (quinone), found in Gloeobacter violaceus (strain ATCC 29082 / PCC 7421).